Here is a 129-residue protein sequence, read N- to C-terminus: Iron-sulfur cluster assembly 1 homolog, mitochondrial (129 aa).

The transit peptide at M1 to A12 directs the protein to the mitochondrion. C57, C121, and C123 together coordinate Fe cation.

Belongs to the HesB/IscA family. As to quaternary structure, interacts with CRY2, but not with CRY1 (in vitro).

It localises to the mitochondrion. In terms of biological role, involved in the maturation of mitochondrial 4Fe-4S proteins functioning late in the iron-sulfur cluster assembly pathway. Probably involved in the binding of an intermediate of Fe/S cluster assembly. This is Iron-sulfur cluster assembly 1 homolog, mitochondrial (Isca1) from Rattus norvegicus (Rat).